Reading from the N-terminus, the 264-residue chain is Endochitinase At2g43590 (264 aa).

A signal peptide spans 1–24 (MAFTKISLVLLLCLLGFFSETVKS). The region spanning 25–59 (QNCGCAPNLCCSQFGYCGTDDAYCGVGCRSGPCRG) is the Chitin-binding type-1 domain. Intrachain disulfides connect C27/C35, C29/C41, C34/C48, and C52/C57. The tract at residues 66–264 (GSVGSIVTQG…GVDPGPNLSC (199 aa)) is catalytic. The active-site Proton donor is the E128. N-linked (GlcNAc...) asparagine glycosylation occurs at N261.

This sequence belongs to the glycosyl hydrolase 19 family. Chitinase class I subfamily.

It carries out the reaction Random endo-hydrolysis of N-acetyl-beta-D-glucosaminide (1-&gt;4)-beta-linkages in chitin and chitodextrins.. This chain is Endochitinase At2g43590, found in Arabidopsis thaliana (Mouse-ear cress).